We begin with the raw amino-acid sequence, 59 residues long: UPF0391 membrane protein GbCGDNIH1_2123 (59 aa).

2 consecutive transmembrane segments (helical) span residues 6–26 (LALF…TGIS) and 35–55 (ILFV…LAAG).

The protein belongs to the UPF0391 family.

The protein resides in the cell membrane. The sequence is that of UPF0391 membrane protein GbCGDNIH1_2123 from Granulibacter bethesdensis (strain ATCC BAA-1260 / CGDNIH1).